We begin with the raw amino-acid sequence, 400 residues long: Glycerol-3-phosphate dehydrogenase [NAD(+)] 1, chloroplastic (400 aa).

The transit peptide at 1-32 (MRFRSFFFSSSIFSLSHSRSPSLSSSRFSSLS) directs the protein to the chloroplast. NAD(+) is bound by residues 61–66 (GSGNWG), phenylalanine 92, phenylalanine 149, lysine 172, and alanine 205. Lysine 172 contributes to the substrate binding site. Residue lysine 257 is the Proton acceptor of the active site. NAD(+) contacts are provided by arginine 321, lysine 350, and glutamine 352. Substrate is bound at residue 321 to 322 (RN).

This sequence belongs to the NAD-dependent glycerol-3-phosphate dehydrogenase family. In terms of tissue distribution, expressed in young seedlings, flowers and siliques. Expressed at low levels in roots.

It localises to the plastid. The protein resides in the chloroplast. The catalysed reaction is sn-glycerol 3-phosphate + NAD(+) = dihydroxyacetone phosphate + NADH + H(+). It participates in membrane lipid metabolism; glycerophospholipid metabolism. Functionally, involved in glycerolipid metabolism. The polypeptide is Glycerol-3-phosphate dehydrogenase [NAD(+)] 1, chloroplastic (DHAPRD) (Arabidopsis thaliana (Mouse-ear cress)).